We begin with the raw amino-acid sequence, 1217 residues long: ATP-dependent RNA helicase DHX30 (1217 aa).

2 positions are modified to phosphoserine: aspartate 15 and serine 29. The region spanning 76–144 (PKNLLNSVIG…QAAAAACQLF (69 aa)) is the DRBM domain. Residues 176–223 (WWRPEPTMPPTSWRQLNPENIRPGGPAGLSRSLGREEEEDEEEELEEG) form a disordered region. The segment covering 211 to 223 (EEEEDEEEELEEG) has biased composition (acidic residues). Serine 249 and serine 403 each carry phosphoserine. Residues 467-635 (LSAIEQHPVV…FGGCPVIKVP (169 aa)) enclose the Helicase ATP-binding domain. 480–487 (GDTGCGKT) lines the ATP pocket. Residues 582–585 (DEVH) carry the DEAH box motif. Residues 677 to 850 (LVTDLVLHID…NLVLQAKIHM (174 aa)) form the Helicase C-terminal domain.

This sequence belongs to the DEAD box helicase family. DEAH subfamily. As to quaternary structure, identified in a complex with TFAM and SSBP1. Interacts (via N-terminus) with ZC3HAV1 (via N-terminal domain) in an RNA-independent manner. Found in a complex with GRSF1, DDX28, FASTKD2 and FASTKD5. Post-translationally, phosphorylated on Ser-15. Expressed in the heart, brain, spleen, lung, liver, skeletal muscle, kidney, and testis. Expression is strongest in the testis and brain, while the lowest levels of expression are found in the spleen and lung.

Its subcellular location is the cytoplasm. The protein localises to the mitochondrion. It is found in the mitochondrion matrix. It localises to the mitochondrion nucleoid. The catalysed reaction is ATP + H2O = ADP + phosphate + H(+). In terms of biological role, RNA-dependent helicase. Plays an important role in the assembly of the mitochondrial large ribosomal subunit. Required for optimal function of the zinc-finger antiviral protein ZC3HAV1. Associates with mitochondrial DNA. Involved in nervous system development and differentiation through its involvement in the up-regulation of a number of genes which are required for neurogenesis, including GSC, NCAM1, neurogenin, and NEUROD. The chain is ATP-dependent RNA helicase DHX30 (Dhx30) from Mus musculus (Mouse).